The following is a 143-amino-acid chain: uncharacterized protein (143 aa).

The Rhodanese domain maps to 50–143; it reads NKEDAVVVDL…GENLPLVRGK (94 aa). Residue lysine 91 is modified to N6-acetyllysine.

This is an uncharacterized protein from Escherichia coli O6:H1 (strain CFT073 / ATCC 700928 / UPEC).